Consider the following 405-residue polypeptide: MADPKYANLPGIASNEPDVYETSDLPEDDQAQFESELEELCSDSVERIVVNPNAAYDKFKDKHVSAKSLDFSDRISKNRRVGYESGDYELLAEGCGVKETPQQKYQRLVNEIHELCQDVEKIQTSTKESGAEERLTPVALAQQAAQLKQQLVSAHLDSLLGPDAHINLTDPDGALAKRLLTQLEVARGVRSGAGADGKTAAPKGPDGVILYELHSRPEQEKFTESAKVAELERRLAELETAVGSGSDKRGPLSSGVQGSSLTETLELLQARVSALDAATLDQVEARLQSVLGKMNEIAKHKATMEDAETQSKVSQLYDVVQKWDAMATSLPQVVRRLTAVRELHEQAMQFGQLLTHLDTTQQMINNSLKDNSTLLTQVQQTMKENLLAVEENFSALDQRMKKLNK.

A disordered region spans residues 1 to 24 (MADPKYANLPGIASNEPDVYETSD). Coiled-coil stretches lie at residues 102–125 (QQKY…IQTS) and 379–405 (QQTM…KLNK).

The protein belongs to the dynactin subunit 2 family. As to quaternary structure, subunit of dynactin, a multiprotein complex part of a tripartite complex with dynein and a adapter, such as BICDL1, BICD2 or HOOK3. The dynactin complex is built around ACTR1A/ACTB filament and consists of an actin-related filament composed of a shoulder domain, a pointed end and a barbed end. Its length is defined by its flexible shoulder domain. The soulder is composed of 2 DCTN1 subunits, 4 DCTN2 and 2 DCTN3.

It is found in the cytoplasm. The protein resides in the cytoskeleton. The protein localises to the microtubule organizing center. It localises to the centrosome. Its subcellular location is the membrane. In terms of biological role, part of the dynactin complex that activates the molecular motor dynein for ultra-processive transport along microtubules. In the dynactin soulder domain, binds the ACTR1A filament and acts as a molecular ruler to determine the length. Modulates cytoplasmic dynein binding to an organelle, and plays a role in prometaphase chromosome alignment and spindle organization during mitosis. Involved in anchoring microtubules to centrosomes. This chain is Dynactin subunit 2 (dctn2), found in Danio rerio (Zebrafish).